The primary structure comprises 481 residues: Thyroid receptor-interacting protein 6 (481 aa).

The span at 1-12 (MSGPTWLPPKQP) shows a compositional bias: pro residues. Residues 1–259 (MSGPTWLPPK…QVPLSQPPEE (259 aa)) are disordered. Arg25 is modified (asymmetric dimethylarginine; alternate). At Arg25 the chain carries Omega-N-methylarginine; alternate. Residue Tyr55 is modified to Phosphotyrosine; by SRC. Ser92 carries the post-translational modification Phosphoserine. The segment covering 108–122 (DGGRGHAPRRPDRQA) has biased composition (basic and acidic residues). Position 111 is an omega-N-methylarginine (Arg111). Low complexity-rich tracts occupy residues 153-173 (SPYG…AGPA) and 183-193 (PVRGCGPPRRG). Residues Arg185 and Arg192 each carry the omega-N-methylarginine modification. Ser195 is modified (phosphoserine). Arg211 carries the omega-N-methylarginine modification. Residues 221-233 (SHREPGPGVKEEA) are compositionally biased toward basic and acidic residues. Arg243 is modified (omega-N-methylarginine). The residue at position 254 (Ser254) is a Phosphoserine. LIM zinc-binding domains lie at 284-321 (CGGC…QLRG), 344-403 (CSTC…FAPR), and 404-472 (CSVC…RIQE). Residues 474–481 (SATVTTDC) form an interaction with MAGI1 and PTPN13 region.

The protein belongs to the zyxin/ajuba family. In terms of assembly, specifically interacts with the ligand binding domain of the thyroid receptor (TR) in the presence of thyroid hormone. Interacts (via the third LIM domain and C-terminus) with PTPN13 (via the second PDZ domain). Interacts (via the second LIM domain or via the third LIM domain plus C-terminus) with PDLIM4 (via PDZ domain). Found in a complex with PTPN13 and PDLIM4. Interacts with SVIL isoform 2. Interacts with LPAR2 but not other LPA receptors. Interacts with PRKAA2. Interacts with MAGI1. Interacts with SCRIB. Post-translationally, phosphorylation at Tyr-55 by SRC is required for enhancement of lysophosphatidic acid-induced cell migration. Tyr-55 is dephosphorylated by PTPN13.

It is found in the cytoplasm. Its subcellular location is the cytoskeleton. It localises to the cell junction. The protein resides in the focal adhesion. The protein localises to the nucleus. Functionally, relays signals from the cell surface to the nucleus to weaken adherens junction and promote actin cytoskeleton reorganization and cell invasiveness. Involved in lysophosphatidic acid-induced cell adhesion and migration. Acts as a transcriptional coactivator for NF-kappa-B and JUN, and mediates the transrepression of these transcription factors induced by glucocorticoid receptor. This chain is Thyroid receptor-interacting protein 6 (TRIP6), found in Bos taurus (Bovine).